Consider the following 399-residue polypeptide: Phosphoglycerate kinase (399 aa).

Residues 22–24, R37, 60–63, R119, and R152 contribute to the substrate site; these read DLN and HFGR. Residues K202, E324, and 354 to 357 each bind ATP; that span reads GGDT.

The protein belongs to the phosphoglycerate kinase family. As to quaternary structure, monomer.

It localises to the cytoplasm. It catalyses the reaction (2R)-3-phosphoglycerate + ATP = (2R)-3-phospho-glyceroyl phosphate + ADP. It participates in carbohydrate degradation; glycolysis; pyruvate from D-glyceraldehyde 3-phosphate: step 2/5. In Sinorhizobium fredii (strain NBRC 101917 / NGR234), this protein is Phosphoglycerate kinase.